A 434-amino-acid polypeptide reads, in one-letter code: UDP-N-acetylglucosamine 1-carboxyvinyltransferase (434 aa).

22–23 contributes to the phosphoenolpyruvate binding site; the sequence is KN. A UDP-N-acetyl-alpha-D-glucosamine-binding site is contributed by Arg-97. The active-site Proton donor is the Asp-121. The UDP-N-acetyl-alpha-D-glucosamine site is built by Asp-319 and Met-341.

This sequence belongs to the EPSP synthase family. MurA subfamily.

Its subcellular location is the cytoplasm. The enzyme catalyses phosphoenolpyruvate + UDP-N-acetyl-alpha-D-glucosamine = UDP-N-acetyl-3-O-(1-carboxyvinyl)-alpha-D-glucosamine + phosphate. The protein operates within cell wall biogenesis; peptidoglycan biosynthesis. Functionally, cell wall formation. Adds enolpyruvyl to UDP-N-acetylglucosamine. The polypeptide is UDP-N-acetylglucosamine 1-carboxyvinyltransferase (Bacteroides fragilis (strain ATCC 25285 / DSM 2151 / CCUG 4856 / JCM 11019 / LMG 10263 / NCTC 9343 / Onslow / VPI 2553 / EN-2)).